Here is a 390-residue protein sequence, read N- to C-terminus: DNA polymerase IV (390 aa).

Residues 6–187 (VMHVDLDAFF…LDIAVMPGIG (182 aa)) enclose the UmuC domain. Residues aspartate 10 and aspartate 105 each contribute to the Mg(2+) site. Glutamate 106 is a catalytic residue.

It belongs to the DNA polymerase type-Y family. As to quaternary structure, monomer. The cofactor is Mg(2+).

The protein resides in the cytoplasm. It carries out the reaction DNA(n) + a 2'-deoxyribonucleoside 5'-triphosphate = DNA(n+1) + diphosphate. Its function is as follows. Poorly processive, error-prone DNA polymerase involved in untargeted mutagenesis. Copies undamaged DNA at stalled replication forks, which arise in vivo from mismatched or misaligned primer ends. These misaligned primers can be extended by PolIV. Exhibits no 3'-5' exonuclease (proofreading) activity. May be involved in translesional synthesis, in conjunction with the beta clamp from PolIII. The sequence is that of DNA polymerase IV from Dehalococcoides mccartyi (strain ATCC BAA-2100 / JCM 16839 / KCTC 5957 / BAV1).